A 203-amino-acid chain; its full sequence is Small ribosomal subunit protein uS4c (203 aa).

The tract at residues 19 to 43 (PGLTNKSPKAGSDLRKQPRSRKKSQ) is disordered. One can recognise an S4 RNA-binding domain in the interval 89–152 (MRLDNILFRL…KSRTLIQNSL (64 aa)).

The protein belongs to the universal ribosomal protein uS4 family. Part of the 30S ribosomal subunit. Contacts protein S5. The interaction surface between S4 and S5 is involved in control of translational fidelity.

The protein resides in the plastid. The protein localises to the chloroplast. Its function is as follows. One of the primary rRNA binding proteins, it binds directly to 16S rRNA where it nucleates assembly of the body of the 30S subunit. In terms of biological role, with S5 and S12 plays an important role in translational accuracy. The chain is Small ribosomal subunit protein uS4c (rps4) from Jasminum nudiflorum (Winter jasmine).